The chain runs to 704 residues: PHD finger protein MALE MEIOCYTE DEATH 1 (704 aa).

The PHD-type zinc finger occupies 606 to 656; sequence MVKCICRARDDDGERMISCDVCEVWQHTRCCGIDDSDTLPPLFVCSNCCEE. Residues Cys609, Cys611, Cys624, Cys627, His632, Cys635, Cys650, and Cys653 each coordinate Zn(2+).

Interacts with JMJ16 in the nucleus of male meiocytes, especially on pachytene chromosomes. As to expression, expressed in inflorescence, specifically in male meiocytes.

It is found in the nucleus. Probable transcription factor required for chromosome organization and progression during male meiosis (e.g. microsporogenesis). Necessary for fertility and meiotic progressive compaction of prophase I chromosomes to metaphase I bivalents. Together with JMJ16, promotes gene expression in male meiocytes in an H3K9me3-dependent manner, and contributes to meiotic chromosome condensation by triggering some condensin promoters (e.g. CAP-D3 and CAP-H). This chain is PHD finger protein MALE MEIOCYTE DEATH 1, found in Arabidopsis thaliana (Mouse-ear cress).